The following is a 256-amino-acid chain: Proteasome subunit alpha-type 8 (256 aa).

This sequence belongs to the peptidase T1A family. Component of the outer alpha-ring of the 20S proteasome core which is composed of 28 subunits that are arranged in four stacked rings, resulting in a barrel-shaped structure. The catalytic chamber with the active sites is on the inside of the barrel. Interacts with canonical subunits of the spermatoproteasome, including proteasome activators PSME4 (also called PA200) and PSME3 (also called PA28-gamma). Interacts with proteasome-interacting proteins chaperones, ubiquitin ligases and ubiquitin specific proteases. Interacts with meiotic proteins cyclin dependent kinase CDK1 and the ATPase TRIP13 as well as proteins of the synaptonemal complex SIX6OS1 and SYCE3.

The protein localises to the nucleus. Component of the spermatoproteasome, a proteasome specifically found in testis that promotes acetylation-dependent degradation of histones, thereby participating actively to the exchange of histones during spermatogenesis. The proteasome is a protein complex that degrades unneeded or damaged proteins by proteolysis, a chemical reaction that breaks peptide bonds. Required for 20S core proteasome assembly, essential for the degradation of meiotic proteins RAD51 and RPA1 at late prophase I and the progression of meiosis I during spermatogenesis. Localizes to the synaptonemal complex, a 'zipper'-like structure that holds homologous chromosome pairs in synapsis during meiotic prophase I. The chain is Proteasome subunit alpha-type 8 (PSMA8) from Homo sapiens (Human).